The sequence spans 108 residues: uncharacterized protein (108 aa).

Residues 1–10 show a composition bias toward polar residues; the sequence is MSGISLTPVK. Disordered regions lie at residues 1 to 63 and 83 to 108; these read MSGI…RPPR and VLSP…PRTQ. Residues 33 to 62 show a composition bias toward basic and acidic residues; it reads YVDRARPSADAKEHCAASDPEEWHSGDRPP.

This is an uncharacterized protein from Gallid herpesvirus 2 (strain Chicken/Md5/ATCC VR-987) (GaHV-2).